Consider the following 300-residue polypeptide: uncharacterized protein (300 aa).

It belongs to the histone deacetylase family.

Functionally, putative deacetylase. This is an uncharacterized protein from Picosynechococcus sp. (strain ATCC 27264 / PCC 7002 / PR-6) (Agmenellum quadruplicatum).